Reading from the N-terminus, the 255-residue chain is Triosephosphate isomerase (255 aa).

Position 9-11 (9-11 (NWK)) interacts with substrate. His-95 acts as the Electrophile in catalysis. Glu-167 functions as the Proton acceptor in the catalytic mechanism. Residues Gly-173, Ser-212, and 233-234 (GG) contribute to the substrate site.

The protein belongs to the triosephosphate isomerase family. As to quaternary structure, homodimer.

The protein localises to the cytoplasm. It catalyses the reaction D-glyceraldehyde 3-phosphate = dihydroxyacetone phosphate. The protein operates within carbohydrate biosynthesis; gluconeogenesis. It participates in carbohydrate degradation; glycolysis; D-glyceraldehyde 3-phosphate from glycerone phosphate: step 1/1. Functionally, involved in the gluconeogenesis. Catalyzes stereospecifically the conversion of dihydroxyacetone phosphate (DHAP) to D-glyceraldehyde-3-phosphate (G3P). The sequence is that of Triosephosphate isomerase from Sodalis glossinidius (strain morsitans).